We begin with the raw amino-acid sequence, 523 residues long: Putative oxidoreductase TDA3 (523 aa).

Residues 157-172 (NSSLSSSGSSLKNDSA) show a composition bias toward low complexity. Residues 157 to 189 (NSSLSSSGSSLKNDSASNEEEGSDIHVSSSVPS) are disordered. Ser-189, Ser-204, and Ser-306 each carry phosphoserine.

Belongs to the TDA3 family. Interacts with BTN2.

The protein resides in the cytoplasm. It localises to the late endosome. Putative oxidoreductase that negatively regulates the retrieval of cargo from late endosomes to the Golgi. Regulates YIF1 and KEX2 localization. Required for fast DNA replication. This chain is Putative oxidoreductase TDA3 (TDA3), found in Saccharomyces cerevisiae (strain ATCC 204508 / S288c) (Baker's yeast).